The sequence spans 274 residues: Large ribosomal subunit protein uL2 (274 aa).

The disordered stretch occupies residues 223 to 258 (VAMNPVDHPHGGGEGRTSGGRHPVTPWGIPTKGYKT).

It belongs to the universal ribosomal protein uL2 family. Part of the 50S ribosomal subunit. Forms a bridge to the 30S subunit in the 70S ribosome.

In terms of biological role, one of the primary rRNA binding proteins. Required for association of the 30S and 50S subunits to form the 70S ribosome, for tRNA binding and peptide bond formation. It has been suggested to have peptidyltransferase activity; this is somewhat controversial. Makes several contacts with the 16S rRNA in the 70S ribosome. The polypeptide is Large ribosomal subunit protein uL2 (Geotalea daltonii (strain DSM 22248 / JCM 15807 / FRC-32) (Geobacter daltonii)).